Consider the following 1186-residue polypeptide: Chromosome partition protein Smc (1186 aa).

32 to 39 serves as a coordination point for ATP; sequence PNGSGKSN. Coiled-coil stretches lie at residues 167–206 and 259–481; these read VLKY…EPLK and SSAI…QAYQ. In terms of domain architecture, SMC hinge spans 519–637; sequence GIRGAVLELI…EDLKGANELA (119 aa). 3 coiled-coil regions span residues 672–864, 893–943, and 990–1029; these read LLGR…MSSS, RDQR…NLLQ, and SIDE…DEEM.

The protein belongs to the SMC family. As to quaternary structure, homodimer.

The protein localises to the cytoplasm. Its function is as follows. Required for chromosome condensation and partitioning. This Bacillus subtilis (strain 168) protein is Chromosome partition protein Smc.